The primary structure comprises 210 residues: Hydrogenase expression/formation protein HupD (210 aa).

Residues glutamate 22, aspartate 68, and histidine 99 each coordinate Ni(2+).

This sequence belongs to the peptidase A31 family.

Not known. Could be involved in the processing of hydrogenase. This Rhodobacter capsulatus (Rhodopseudomonas capsulata) protein is Hydrogenase expression/formation protein HupD (hupD).